The sequence spans 504 residues: AMP phosphorylase 1 (504 aa).

Residues Gly169, 195–200 (SRAITS), and Thr204 contribute to the AMP site. The active-site Proton donor is the Asp257. Ser265 and Lys289 together coordinate AMP.

Belongs to the thymidine/pyrimidine-nucleoside phosphorylase family. Type 2 subfamily.

It carries out the reaction AMP + phosphate = alpha-D-ribose 1,5-bisphosphate + adenine. It catalyses the reaction CMP + phosphate = cytosine + alpha-D-ribose 1,5-bisphosphate. The enzyme catalyses UMP + phosphate = alpha-D-ribose 1,5-bisphosphate + uracil. Its function is as follows. Catalyzes the conversion of AMP and phosphate to adenine and ribose 1,5-bisphosphate (R15P). Exhibits phosphorylase activity toward CMP and UMP in addition to AMP. Functions in an archaeal AMP degradation pathway, together with R15P isomerase and RubisCO. The polypeptide is AMP phosphorylase 1 (Archaeoglobus fulgidus (strain ATCC 49558 / DSM 4304 / JCM 9628 / NBRC 100126 / VC-16)).